Here is a 125-residue protein sequence, read N- to C-terminus: UPF0225 protein Cgl1438/cg1626 (125 aa).

The protein belongs to the UPF0225 family.

This Corynebacterium glutamicum (strain ATCC 13032 / DSM 20300 / JCM 1318 / BCRC 11384 / CCUG 27702 / LMG 3730 / NBRC 12168 / NCIMB 10025 / NRRL B-2784 / 534) protein is UPF0225 protein Cgl1438/cg1626.